Here is a 145-residue protein sequence, read N- to C-terminus: Granulysin (145 aa).

Residues 1–22 form the signal peptide; that stretch reads MATWALLLLAAMLLGNPGLVFS. A Saposin B-type domain is found at 62–142; it reads LGRDYRTCLT…EDLRLCIPST (81 aa). 2 disulfides stabilise this stretch: Cys69–Cys132 and Cys96–Cys107.

A 9 kDa form is produced by proteolytic processing of a 15 kDa protein. In terms of tissue distribution, expressed in natural killer and T-cells.

The protein resides in the secreted. Its function is as follows. Antimicrobial protein that kills intracellular pathogens. Active against a broad range of microbes, including Gram-positive and Gram-negative bacteria, fungi, and parasites. Kills Mycobacterium tuberculosis. This Homo sapiens (Human) protein is Granulysin (GNLY).